We begin with the raw amino-acid sequence, 482 residues long: Serine carboxypeptidase-like 26 (482 aa).

Residues 1-28 (MAVAAAAAARRRDVSCLLLLLCFSSSMA) form the signal peptide. Intrachain disulfides connect cysteine 101-cysteine 366, cysteine 263-cysteine 274, and cysteine 298-cysteine 333. N-linked (GlcNAc...) asparagine glycosylation is present at asparagine 152. Serine 194 is an active-site residue. 4 N-linked (GlcNAc...) asparagine glycosylation sites follow: asparagine 269, asparagine 301, asparagine 354, and asparagine 375. Active-site residues include aspartate 403 and histidine 455.

Belongs to the peptidase S10 family.

It localises to the secreted. Functionally, acts as a positive regulator of grain size by controlling grain width, filling and weight. High expression of GS5 in the grain is correlated with large grain size. The protein is Serine carboxypeptidase-like 26 of Oryza sativa subsp. japonica (Rice).